The following is a 181-amino-acid chain: ATP synthase subunit delta (181 aa).

Belongs to the ATPase delta chain family. In terms of assembly, F-type ATPases have 2 components, F(1) - the catalytic core - and F(0) - the membrane proton channel. F(1) has five subunits: alpha(3), beta(3), gamma(1), delta(1), epsilon(1). F(0) has three main subunits: a(1), b(2) and c(10-14). The alpha and beta chains form an alternating ring which encloses part of the gamma chain. F(1) is attached to F(0) by a central stalk formed by the gamma and epsilon chains, while a peripheral stalk is formed by the delta and b chains.

It is found in the cell membrane. F(1)F(0) ATP synthase produces ATP from ADP in the presence of a proton or sodium gradient. F-type ATPases consist of two structural domains, F(1) containing the extramembraneous catalytic core and F(0) containing the membrane proton channel, linked together by a central stalk and a peripheral stalk. During catalysis, ATP synthesis in the catalytic domain of F(1) is coupled via a rotary mechanism of the central stalk subunits to proton translocation. In terms of biological role, this protein is part of the stalk that links CF(0) to CF(1). It either transmits conformational changes from CF(0) to CF(1) or is implicated in proton conduction. The protein is ATP synthase subunit delta of Clostridium kluyveri (strain NBRC 12016).